We begin with the raw amino-acid sequence, 319 residues long: Cell division protein FtsN (319 aa).

A disordered region spans residues 1 to 30 (MAQRDYVRRSQPAPSRRKKSTSRKKQRNLP). Residues 1-33 (MAQRDYVRRSQPAPSRRKKSTSRKKQRNLPAVS) lie on the Cytoplasmic side of the membrane. The segment at 4 to 6 (RDY) is mediates interaction with FtsA. Over residues 15–27 (SRRKKSTSRKKQR) the composition is skewed to basic residues. Residues 34-54 (PAMVAIAAAVLVTFIGGLYFI) traverse the membrane as a helical segment. At 55–319 (THHKKEESET…TNCIRLAAGG (265 aa)) the chain is on the periplasmic side. 2 disordered regions span residues 60-79 (EESE…PPKP) and 89-113 (LESR…TPEQ). A run of 4 repeats spans residues 115–120 (TPEQRQ), 145–150 (TPEQRQ), 197–200 (QSKP), and 220–223 (QSKP). Residues 115–150 (TPEQRQLLEQMQADMRQQPTQLVEVPWNEQTPEQRQ) form a 2 X 6 AA repeats region. A disordered region spans residues 140-245 (PWNEQTPEQR…PKPTAEKKDE (106 aa)). A compositionally biased stretch (low complexity) spans 143–171 (EQTPEQRQQTLQRQRQAQQLAEQQRLAQQ). A compositionally biased stretch (polar residues) spans 172–221 (SRTTEQSWQQQTRTSQAAPVQAQPRQSKPASSQQPYQDLLQTPAHTTAQS). The 2 X 4 AA repeats stretch occupies residues 197-223 (QSKPASSQQPYQDLLQTPAHTTAQSKP). Over residues 222–238 (KPQQAAPVARAADAPKP) the composition is skewed to low complexity. The SPOR domain occupies 242 to 316 (KKDERRWMVQ…AGHTNCIRLA (75 aa)). A disulfide bridge links Cys252 with Cys312.

It belongs to the FtsN family. Interacts with FtsA via its N-terminal cytoplasmic domain. Interacts with ZapA, FtsQ, FtsW and FtsI.

It is found in the cell inner membrane. Its function is as follows. Essential cell division protein that activates septal peptidoglycan synthesis and constriction of the cell. Acts on both sides of the membrane, via interaction with FtsA in the cytoplasm and interaction with the FtsQBL complex in the periplasm. These interactions may induce a conformational switch in both FtsA and FtsQBL, leading to septal peptidoglycan synthesis by FtsI and associated synthases. Required for full FtsI activity. Required for recruitment of AmiC to the septal ring. The polypeptide is Cell division protein FtsN (Escherichia coli (strain K12)).